The chain runs to 563 residues: Efflux pump FUS6 (563 aa).

The segment at methionine 1–glutamate 30 is disordered. A run of 5 helical transmembrane segments spans residues tryptophan 39 to isoleucine 59, leucine 75 to alanine 95, serine 105 to histidine 125, glycine 138 to isoleucine 158, and isoleucine 167 to alanine 187. A glycan (N-linked (GlcNAc...) asparagine) is linked at asparagine 189. Transmembrane regions (helical) follow at residues tryptophan 194–leucine 214, tryptophan 233–glycine 253, and glycine 261–tyrosine 281. A glycan (N-linked (GlcNAc...) asparagine) is linked at asparagine 299. The next 6 membrane-spanning stretches (helical) occupy residues leucine 305 to valine 325, valine 340 to isoleucine 360, valine 368 to aspartate 388, isoleucine 401 to serine 421, alanine 433 to phenylalanine 453, and lysine 509 to valine 529. A glycan (N-linked (GlcNAc...) asparagine) is linked at asparagine 553.

It belongs to the major facilitator superfamily. TCR/Tet family.

It is found in the membrane. In terms of biological role, efflux pump; part of the gene cluster that mediates the biosynthesis of the mycotoxin fusarin C. Within the cluster, FUS1, FUS2, FUS8 and FUS9 are sufficient for fusarin production. The other FUS cluster members are not essential for fusarin C biosynthesis. The sequence is that of Efflux pump FUS6 from Gibberella moniliformis (strain M3125 / FGSC 7600) (Maize ear and stalk rot fungus).